The sequence spans 1378 residues: Roundabout homolog 2 (1378 aa).

Residues 1 to 21 (MSLLMFTQLLLCGFLYVRVDG) form the signal peptide. Residues 22–859 (SRLRQEDFPP…EQITDVVKQP (838 aa)) are Extracellular-facing. 5 consecutive Ig-like C2-type domains span residues 31–127 (PRIV…ASLE), 133–220 (DDFR…AELT), 225–309 (PTFL…ATLT), 314–409 (PQFV…LEVT), and 418–504 (PIIL…AVLD). Cys52 and Cys110 are disulfide-bonded. N-linked (GlcNAc...) asparagine glycosylation occurs at Asn123. 3 disulfides stabilise this stretch: Cys154-Cys203, Cys246-Cys293, and Cys335-Cys391. Asn426 carries an N-linked (GlcNAc...) asparagine glycan. A disulfide bridge connects residues Cys439 and Cys488. Fibronectin type-III domains lie at 524-618 (PPSK…TQDI), 637-735 (VLVR…TEEA), and 739-836 (PPQS…IGRR). Residues 603–625 (LSDPSPMSDPVRTQDISPPAQGV) are disordered. 4 N-linked (GlcNAc...) asparagine glycosylation sites follow: Asn752, Asn782, Asn789, and Asn845. Residues 860–880 (AFIAGIGGACWVILMGFSIWL) traverse the membrane as a helical segment. Topologically, residues 881–1378 (YWRRKKRKGL…NSQGQFTGEL (498 aa)) are cytoplasmic. Disordered regions lie at residues 1032–1084 (GFGY…PLPG), 1124–1156 (EDDDRVPTPPVRGVASSPAISFGQQSTATLTPS), and 1215–1348 (DVAD…KTEV). Positions 1058 to 1067 (SSKPQKNNGS) are enriched in low complexity. Residues 1141–1155 (PAISFGQQSTATLTP) are compositionally biased toward polar residues. A Phosphothreonine modification is found at Thr1154. Ser1156 carries the phosphoserine modification. Residues 1215–1228 (DVADDDADDEEEAL) show a composition bias toward acidic residues. Over residues 1240–1285 (TPGSSMDNLDSSVTGKAFTSSQRPRPTSPFSTDSNTSAALSQSQRP) the composition is skewed to polar residues. Residues 1319–1343 (SKPSFPSPGGHSSSGTASSKGSTGP) show a composition bias toward low complexity.

It belongs to the immunoglobulin superfamily. ROBO family. As to quaternary structure, interacts with SLIT2.

The protein localises to the membrane. Its function is as follows. Receptor for SLIT2, and probably SLIT1, which are thought to act as molecular guidance cue in cellular migration, including axonal navigation at the ventral midline of the neural tube and projection of axons to different regions during neuronal development. This Homo sapiens (Human) protein is Roundabout homolog 2 (ROBO2).